A 102-amino-acid polypeptide reads, in one-letter code: MYAIIKNGGKQYKVQEGDILLFDRMTLEPKATFEIKEVLAVNAGELKMGAPFLEGAVVTAEVINEGRDKKVITFKKRRRKDSKVKRGFRRDYTRVRITKIAA.

It belongs to the bacterial ribosomal protein bL21 family. In terms of assembly, part of the 50S ribosomal subunit. Contacts protein L20.

Functionally, this protein binds to 23S rRNA in the presence of protein L20. This chain is Large ribosomal subunit protein bL21, found in Sulfurimonas denitrificans (strain ATCC 33889 / DSM 1251) (Thiomicrospira denitrificans (strain ATCC 33889 / DSM 1251)).